A 260-amino-acid polypeptide reads, in one-letter code: Meiotic recombination protein rec6 (260 aa).

Positions 197–222 (QYSESSLLDDSQLLCSSPPVDSTEEA) are disordered. Residues 199–213 (SESSLLDDSQLLCSS) show a composition bias toward low complexity.

Belongs to the TOP6B-like family. Component of the DSB catalytic core (DSBC) complex, composed of at least rec12, rec6 and rec14. The complex interacts with mde2.

Required for formation of the rec12-mediated double-strand breaks (DSBs) that initiate meiotic recombination. May be involved primarily in the early steps of meiotic recombination. The polypeptide is Meiotic recombination protein rec6 (Schizosaccharomyces pombe (strain 972 / ATCC 24843) (Fission yeast)).